A 90-amino-acid chain; its full sequence is Acylphosphatase (90 aa).

One can recognise an Acylphosphatase-like domain in the interval 3–90 (QRQFTVYGCV…RVFSDFTIER (88 aa)). Catalysis depends on residues Arg18 and Asn36.

This sequence belongs to the acylphosphatase family.

It catalyses the reaction an acyl phosphate + H2O = a carboxylate + phosphate + H(+). In Actinobacillus succinogenes (strain ATCC 55618 / DSM 22257 / CCUG 43843 / 130Z), this protein is Acylphosphatase (acyP).